Consider the following 94-residue polypeptide: Protein S100-A1 (94 aa).

2 consecutive EF-hand domains span residues 13–48 and 50–85; these read INVF…FLDV and KDAD…LTVA. Ca(2+) contacts are provided by K28, E33, D63, N65, D67, E69, and E74. At C86 the chain carries S-nitrosocysteine.

The protein belongs to the S-100 family. Dimer of either two alpha chains, or two beta chains, or one alpha and one beta chain. Also forms heterodimers with S100P. Interacts with AGER. Interacts with CAPZA1. Interacts with FKBP4. Interacts with RYR1 and RYR2. Interacts with CACYBP in a calcium-dependent manner. Interacts with PPP5C (via TPR repeats); the interaction is calcium-dependent and modulates PPP5C activity. Interacts with ATP2A2 and PLN in a Ca(2+)-dependent manner. Interacts with mitochondrial F1-ATPase subunits ATP5F1A and ATP5F1B; these interactions increase F1-ATPase activity. Post-translationally, glutathionylated; glutathionylation increases affinity to calcium about 10-fold. Although predominant among the water-soluble brain proteins, S100 is also found in a variety of other tissues.

The protein resides in the cytoplasm. It localises to the sarcoplasmic reticulum. It is found in the mitochondrion. Its function is as follows. Small calcium binding protein that plays important roles in several biological processes such as Ca(2+) homeostasis, chondrocyte biology and cardiomyocyte regulation. In response to an increase in intracellular Ca(2+) levels, binds calcium which triggers conformational changes. These changes allow interactions with specific target proteins and modulate their activity. Regulates a network in cardiomyocytes controlling sarcoplasmic reticulum Ca(2+) cycling and mitochondrial function through interaction with the ryanodine receptors RYR1 and RYR2, sarcoplasmic reticulum Ca(2+)-ATPase/ATP2A2 and mitochondrial F1-ATPase. Facilitates diastolic Ca(2+) dissociation and myofilament mechanics in order to improve relaxation during diastole. The sequence is that of Protein S100-A1 (S100a1) from Rattus norvegicus (Rat).